Here is a 299-residue protein sequence, read N- to C-terminus: GTPase Era (299 aa).

The Era-type G domain occupies 9–177 (RSGSVAVIGR…VGDLLKLVPE (169 aa)). The interval 17 to 24 (GRPNVGKS) is G1. Position 17–24 (17–24 (GRPNVGKS)) interacts with GTP. Residues 43–47 (QTTRH) form a G2 region. Residues 64-67 (DTPG) form a G3 region. GTP is bound by residues 64–68 (DTPGL) and 126–129 (NKVD). The interval 126-129 (NKVD) is G4. The interval 156-158 (VSA) is G5. The 85-residue stretch at 200–284 (VREQLMRQLG…FLETWVRVRE (85 aa)) folds into the KH type-2 domain.

Belongs to the TRAFAC class TrmE-Era-EngA-EngB-Septin-like GTPase superfamily. Era GTPase family. As to quaternary structure, monomer.

The protein resides in the cytoplasm. Its subcellular location is the cell inner membrane. Its function is as follows. An essential GTPase that binds both GDP and GTP, with rapid nucleotide exchange. Plays a role in 16S rRNA processing and 30S ribosomal subunit biogenesis and possibly also in cell cycle regulation and energy metabolism. The protein is GTPase Era of Xanthomonas axonopodis pv. citri (strain 306).